Here is a 176-residue protein sequence, read N- to C-terminus: Shikimate kinase (176 aa).

14–19 contributes to the ATP binding site; that stretch reads GAGKST. Ser-18 is a binding site for Mg(2+). Asp-36, Arg-60, and Gly-83 together coordinate substrate. Residue Arg-121 participates in ATP binding. Substrate is bound at residue Arg-140.

It belongs to the shikimate kinase family. As to quaternary structure, monomer. Mg(2+) serves as cofactor.

Its subcellular location is the cytoplasm. The enzyme catalyses shikimate + ATP = 3-phosphoshikimate + ADP + H(+). It participates in metabolic intermediate biosynthesis; chorismate biosynthesis; chorismate from D-erythrose 4-phosphate and phosphoenolpyruvate: step 5/7. In terms of biological role, catalyzes the specific phosphorylation of the 3-hydroxyl group of shikimic acid using ATP as a cosubstrate. This chain is Shikimate kinase, found in Francisella philomiragia subsp. philomiragia (strain ATCC 25017 / CCUG 19701 / FSC 153 / O#319-036).